We begin with the raw amino-acid sequence, 172 residues long: Large ribosomal subunit protein uL10 (172 aa).

Belongs to the universal ribosomal protein uL10 family. As to quaternary structure, part of the ribosomal stalk of the 50S ribosomal subunit. The N-terminus interacts with L11 and the large rRNA to form the base of the stalk. The C-terminus forms an elongated spine to which L12 dimers bind in a sequential fashion forming a multimeric L10(L12)X complex.

Forms part of the ribosomal stalk, playing a central role in the interaction of the ribosome with GTP-bound translation factors. The polypeptide is Large ribosomal subunit protein uL10 (Mesorhizobium japonicum (strain LMG 29417 / CECT 9101 / MAFF 303099) (Mesorhizobium loti (strain MAFF 303099))).